The primary structure comprises 480 residues: Membrane-bound lytic murein transglycosylase F (480 aa).

The first 15 residues, 1 to 15 (MNRILLTLLTLTLLA), serve as a signal peptide directing secretion. A non-LT domain region spans residues 16-259 (GCQRVAVEET…HLDEKYFAHV (244 aa)). The LT domain stretch occupies residues 260-480 (KRFDYVDTRA…EKAITGAQPE (221 aa)). Glutamate 304 is an active-site residue.

In the N-terminal section; belongs to the bacterial solute-binding protein 3 family. It in the C-terminal section; belongs to the transglycosylase Slt family.

Its subcellular location is the cell outer membrane. The catalysed reaction is Exolytic cleavage of the (1-&gt;4)-beta-glycosidic linkage between N-acetylmuramic acid (MurNAc) and N-acetylglucosamine (GlcNAc) residues in peptidoglycan, from either the reducing or the non-reducing ends of the peptidoglycan chains, with concomitant formation of a 1,6-anhydrobond in the MurNAc residue.. Functionally, murein-degrading enzyme that degrades murein glycan strands and insoluble, high-molecular weight murein sacculi, with the concomitant formation of a 1,6-anhydromuramoyl product. Lytic transglycosylases (LTs) play an integral role in the metabolism of the peptidoglycan (PG) sacculus. Their lytic action creates space within the PG sacculus to allow for its expansion as well as for the insertion of various structures such as secretion systems and flagella. The protein is Membrane-bound lytic murein transglycosylase F of Shewanella woodyi (strain ATCC 51908 / MS32).